We begin with the raw amino-acid sequence, 176 residues long: Large ribosomal subunit protein bL19 (176 aa).

The protein belongs to the bacterial ribosomal protein bL19 family.

In terms of biological role, this protein is located at the 30S-50S ribosomal subunit interface and may play a role in the structure and function of the aminoacyl-tRNA binding site. In Sinorhizobium fredii (strain NBRC 101917 / NGR234), this protein is Large ribosomal subunit protein bL19.